The following is a 414-amino-acid chain: Histidine--tRNA ligase (414 aa).

It belongs to the class-II aminoacyl-tRNA synthetase family. In terms of assembly, homodimer.

It is found in the cytoplasm. It carries out the reaction tRNA(His) + L-histidine + ATP = L-histidyl-tRNA(His) + AMP + diphosphate + H(+). In Endomicrobium trichonymphae, this protein is Histidine--tRNA ligase.